The primary structure comprises 704 residues: Elongation factor G (704 aa).

Residues 8–290 form the tr-type G domain; that stretch reads ARYRNIGISA…AVIDYLPAPT (283 aa). Residues 17–24, 88–92, and 142–145 each bind GTP; these read AHIDAGKT, DTPGH, and NKMD.

This sequence belongs to the TRAFAC class translation factor GTPase superfamily. Classic translation factor GTPase family. EF-G/EF-2 subfamily.

Its subcellular location is the cytoplasm. Catalyzes the GTP-dependent ribosomal translocation step during translation elongation. During this step, the ribosome changes from the pre-translocational (PRE) to the post-translocational (POST) state as the newly formed A-site-bound peptidyl-tRNA and P-site-bound deacylated tRNA move to the P and E sites, respectively. Catalyzes the coordinated movement of the two tRNA molecules, the mRNA and conformational changes in the ribosome. This Pectobacterium atrosepticum (strain SCRI 1043 / ATCC BAA-672) (Erwinia carotovora subsp. atroseptica) protein is Elongation factor G.